The chain runs to 367 residues: Porin Omp2a (367 aa).

A signal peptide spans 1–22 (MNIKSLLLGSAAALVAASGAQA).

It belongs to the alphaproteobacteria porin family. In terms of assembly, monomer.

Its subcellular location is the cell outer membrane. Its function is as follows. Forms passive diffusion pores that allow small molecular weight hydrophilic materials across the outer membrane. The protein is Porin Omp2a (omp2a) of Brucella canis (strain ATCC 23365 / NCTC 10854 / RM-666).